Here is a 556-residue protein sequence, read N- to C-terminus: MKNDIEIAQSAKMEPIINIAKKIGLGEDDIELYGKYKCKISLDAIKKLENNKDGKLVLVTAINPTPAGEGKSTVTVGLGQALNKIGKNTVIALREPSLGPVFGIKGGAAGGGYAQVVPMEDINLHFTGDMHAITSANNLLCAAIDNHIHQGNLLRIDSRRIVFKRVMDMNDRALRNIVVGMGGKINGFLREDGFMITVASEIMAILCMASDLEDLKERMGNILIAYNLDGEPVYAKELEVQGAMALLMKDAIKPNLVQTLENTPAIIHGGPFANIAHGCNSIIATKTALKMSDITITEAGFGADLGAEKFLDIKCRYGNLNPDCVVLVATIRALKHHGGVKKDELNISNVDALNKGMKNLEKQIENIKAYGVPVVVAINKFITDSDEEVKAIEDFCKNIGVEVSLTEVWEKGGEGGIDLANKVIKTMETEPSNFKMIYDSEESINDKILKIVQTIYGGKGVNYTPQALKQIAEIEKFNLDKLPICMAKTQYSLSDNPSLLGRPENFDITVREVRVSNGAGFIVVLTGDVMTMPGLPKVPAANRMDIKDNGEIVGLF.

ATP is bound at residue 65–72 (TPAGEGKS).

Belongs to the formate--tetrahydrofolate ligase family.

The enzyme catalyses (6S)-5,6,7,8-tetrahydrofolate + formate + ATP = (6R)-10-formyltetrahydrofolate + ADP + phosphate. It functions in the pathway one-carbon metabolism; tetrahydrofolate interconversion. The chain is Formate--tetrahydrofolate ligase from Clostridium perfringens (strain ATCC 13124 / DSM 756 / JCM 1290 / NCIMB 6125 / NCTC 8237 / Type A).